The primary structure comprises 83 residues: Small ribosomal subunit protein bS16 (83 aa).

The protein belongs to the bacterial ribosomal protein bS16 family.

This Ectopseudomonas mendocina (strain ymp) (Pseudomonas mendocina) protein is Small ribosomal subunit protein bS16.